The sequence spans 582 residues: DNA repair and recombination protein radC (582 aa).

Residues 146 to 150 mediate DNA binding; that stretch reads KRALR. Residues 194–204 show a composition bias toward basic and acidic residues; the sequence is KKEPMRVKPSL. Disordered stretches follow at residues 194–226, 310–400, and 485–582; these read KKEP…NSAA, QIPN…INGQ, and APSG…QHQH. Residues 326–335 show a composition bias toward polar residues; that stretch reads QNQYTNQRQS. The span at 516-529 shows a compositional bias: low complexity; sequence AAAQNNTAAANRMA.

The protein belongs to the RAD52 family. In terms of assembly, part of a complex that includes RAD51, RAD52 and RAD59.

The protein resides in the nucleus. Functionally, involved in DNA double-strand break (DSB) repair and recombination. Promotes the annealing of complementary single-stranded DNA and by stimulation of the RAD51 recombinase. The chain is DNA repair and recombination protein radC (radC) from Emericella nidulans (strain FGSC A4 / ATCC 38163 / CBS 112.46 / NRRL 194 / M139) (Aspergillus nidulans).